Here is a 662-residue protein sequence, read N- to C-terminus: DCC-interacting protein 13-beta (662 aa).

In terms of domain architecture, BAR spans A3 to V268. The PH domain maps to L277–R375. The PID domain occupies S486–D635. Residues D643–A662 are disordered. Basic and acidic residues predominate over residues S653–A662.

In terms of assembly, homodimer. Homotetramer. Binds RAB5A/Rab5 through an N-terminal domain. This interaction is essential for its recruitment to endosomal membranes as well as its role in cell proliferation. Binds subunits of the NuRD/MeCP1 complex. Interacts with FSHR; interaction is independent of follicle stimulating hormone stimulation. Interacts with APPL1; the interaction is decreased by adiponectin in a time-dependent manner. Forms a complex comprising APPL1, RUVBL2, CTNNB1, HDAC1 and HDAC2; interaction reduces interaction between CTNNB1, HDAC1, HDAC2 and RUVBL2 leading to the decrease of deacetylase activity of this complex; affects the recruitment of repressive complexes to the Wnt target genes. Interacts (via BAR domain) with TBC1D1; interaction is dependent of TBC1D1 phosphorylation at 'Ser-235'; interaction diminishes the phosphorylation of TBC1D1 at 'Thr-596', resulting in inhibition of SLC2A4 translocation and glucose uptake. Interacts with ANXA2; targets APPL2 to endosomes and acting in parallel to RAB5A. Interacts with RAB31 (in GTP-bound form); interaction contributes to or enhances recruitment of APPL2 to the phagosomes; interaction enhances Fc-gamma receptor-mediated phagocytosis through PI3K/Akt signaling in macrophages. Interacts with PIK3R1; forms a complex with PIK3R1 and APPL1. Interacts (via BAR domain) with ADIPOR1; hinders the accessibility of APPL1 to ADIPOR1; negatively regulates adiponectin signaling; ADIPOQ dissociates this interaction and facilitates the recruitment of APPL1 to ADIPOR1. Interacts (via BAR domain) with ADIPOR2; ADIPOQ dissociates this interaction.

It localises to the early endosome membrane. Its subcellular location is the nucleus. The protein localises to the cell membrane. It is found in the endosome membrane. The protein resides in the cytoplasm. It localises to the cytoplasmic vesicle. Its subcellular location is the phagosome. The protein localises to the cell projection. It is found in the ruffle. The protein resides in the ruffle membrane. It localises to the phagosome membrane. Functionally, multifunctional adapter protein that binds to various membrane receptors, nuclear factors and signaling proteins to regulate many processes, such as cell proliferation, immune response, endosomal trafficking and cell metabolism. Regulates signaling pathway leading to cell proliferation through interaction with RAB5A and subunits of the NuRD/MeCP1 complex. Plays a role in immune response by modulating phagocytosis, inflammatory and innate immune responses. In macrophages, enhances Fc-gamma receptor-mediated phagocytosis through interaction with RAB31 leading to activation of PI3K/Akt signaling. In response to LPS, modulates inflammatory responses by playing a key role on the regulation of TLR4 signaling and in the nuclear translocation of RELA/NF-kappa-B p65 and the secretion of pro- and anti-inflammatory cytokines. Also functions as a negative regulator of innate immune response via inhibition of AKT1 signaling pathway by forming a complex with APPL1 and PIK3R1. Plays a role in endosomal trafficking of TGFBR1 from the endosomes to the nucleus. Plays a role in cell metabolism by regulating adiponecting ans insulin signaling pathways and adaptative thermogenesis. In muscle, negatively regulates adiponectin-simulated glucose uptake and fatty acid oyidation by inhibiting adiponectin signaling pathway through APPL1 sequestration thereby antagonizing APPL1 action. In muscles, negatively regulates insulin-induced plasma membrane recruitment of GLUT4 and glucose uptake through interaction with TBC1D1. Plays a role in cold and diet-induced adaptive thermogenesis by activating ventromedial hypothalamus (VMH) neurons throught AMPK inhibition which enhances sympathetic outflow to subcutaneous white adipose tissue (sWAT), sWAT beiging and cold tolerance. Also plays a role in other signaling pathways namely Wnt/beta-catenin, HGF and glucocorticoid receptor signaling. Positive regulator of beta-catenin/TCF-dependent transcription through direct interaction with RUVBL2/reptin resulting in the relief of RUVBL2-mediated repression of beta-catenin/TCF target genes by modulating the interactions within the beta-catenin-reptin-HDAC complex. May affect adult neurogenesis in hippocampus and olfactory system via regulating the sensitivity of glucocorticoid receptor. Required for fibroblast migration through HGF cell signaling. The polypeptide is DCC-interacting protein 13-beta (Rattus norvegicus (Rat)).